The chain runs to 137 residues: Peptide methionine sulfoxide reductase MsrB (137 aa).

One can recognise a MsrB domain in the interval 7 to 129 (PDHPATELNE…NSASLSFTDG (123 aa)). Residues cysteine 46, cysteine 49, cysteine 95, and cysteine 98 each coordinate Zn(2+). Catalysis depends on cysteine 118, which acts as the Nucleophile.

Belongs to the MsrB Met sulfoxide reductase family. Zn(2+) serves as cofactor.

The enzyme catalyses L-methionyl-[protein] + [thioredoxin]-disulfide + H2O = L-methionyl-(R)-S-oxide-[protein] + [thioredoxin]-dithiol. The chain is Peptide methionine sulfoxide reductase MsrB from Serratia proteamaculans (strain 568).